The chain runs to 570 residues: 5-aminolevulinate synthase, mitochondrial (570 aa).

Residues 1–53 (MESVIRSSAKICPFMHSATGSMQSVKALKNANLPAIAQQCPFMGKAMEQRRGY) constitute a mitochondrion transit peptide. 3 residues coordinate substrate: R119, S232, and K251. The pyridoxal 5'-phosphate site is built by S284, H312, and T356. K359 is an active-site residue. N6-(pyridoxal phosphate)lysine is present on K359. 2 residues coordinate pyridoxal 5'-phosphate: T388 and T389. T474 provides a ligand contact to substrate.

The protein belongs to the class-II pyridoxal-phosphate-dependent aminotransferase family. As to quaternary structure, homodimer. Pyridoxal 5'-phosphate serves as cofactor.

Its subcellular location is the mitochondrion matrix. The enzyme catalyses succinyl-CoA + glycine + H(+) = 5-aminolevulinate + CO2 + CoA. The protein operates within porphyrin-containing compound metabolism; protoporphyrin-IX biosynthesis; 5-aminolevulinate from glycine: step 1/1. In terms of biological role, catalyzes the synthesis of 5-aminolevulinate (ALA) from succinyl-CoA and glycine, the first and rate-limiting step in heme biosynthesis. In Kluyveromyces lactis (strain ATCC 8585 / CBS 2359 / DSM 70799 / NBRC 1267 / NRRL Y-1140 / WM37) (Yeast), this protein is 5-aminolevulinate synthase, mitochondrial (HEM1).